A 600-amino-acid polypeptide reads, in one-letter code: Zinc finger and BTB domain-containing protein 46 (600 aa).

A BTB domain is found at Cys31–Ser99. Residues Arg173–Gly222 form a disordered region. Over residues Gly197–Gly207 the composition is skewed to basic and acidic residues. Lys229 participates in a covalent cross-link: Glycyl lysine isopeptide (Lys-Gly) (interchain with G-Cter in SUMO2). Ser234 carries the phosphoserine modification. Residues Pro235 to Thr278 form a disordered region. The segment covering Leu243–Gly259 has biased composition (polar residues). 2 consecutive C2H2-type zinc fingers follow at residues Phe418–His436 and Tyr446–His468. Residues Leu513–Ser600 form a disordered region. A compositionally biased stretch (acidic residues) spans Tyr533–Asp555. Basic and acidic residues-rich tracts occupy residues Val556 to Asp574 and Glu591 to Ser600.

Post-translationally, sumoylated. Desumoylation by DESI1 reverses transcriptional repression activity.

Its subcellular location is the nucleus. Functions as a transcriptional repressor for PRDM1. This chain is Zinc finger and BTB domain-containing protein 46 (Zbtb46), found in Mus musculus (Mouse).